A 591-amino-acid chain; its full sequence is DEAD-box ATP-dependent RNA helicase 30 (591 aa).

The disordered stretch occupies residues 1–109; that stretch reads MSSYDRRFAD…GRGGSSKREL (109 aa). Residues 72–103 are compositionally biased toward gly residues; that stretch reads FSVGRGGGRGGYGQYGDRNGGGNWGGGGGRGG. Positions 165 to 193 match the Q motif motif; that stretch reads KMFQDANFPDNILEAIAKLGFTEPTPIQA. The 176-residue stretch at 196–371 folds into the Helicase ATP-binding domain; that stretch reads WPMALKGRDL…RQFLRDPYKA (176 aa). An ATP-binding site is contributed by 209 to 216; sequence AETGSGKT. The DEAD box signature appears at 319-322; that stretch reads DEAD. A Helicase C-terminal domain is found at 399–544; it reads RLLTLLKQLM…VVPPTLSALV (146 aa). Residues 547 to 591 form a disordered region; the sequence is SGSGYGGSGGGRNFRPRGGGRGGGFGDKRSRSTSNFVPHGGKRTW. Gly residues predominate over residues 549–571; it reads SGYGGSGGGRNFRPRGGGRGGGF.

The protein belongs to the DEAD box helicase family. DDX5/DBP2 subfamily.

It is found in the nucleus. It catalyses the reaction ATP + H2O = ADP + phosphate + H(+). In terms of biological role, ATP-dependent RNA helicase involved nonsense-mediated mRNA decay and ribosome biogenesis through rRNA processing. The chain is DEAD-box ATP-dependent RNA helicase 30 (RH30) from Arabidopsis thaliana (Mouse-ear cress).